The chain runs to 133 residues: UPF0102 protein Plav_3586 (133 aa).

Belongs to the UPF0102 family.

The polypeptide is UPF0102 protein Plav_3586 (Parvibaculum lavamentivorans (strain DS-1 / DSM 13023 / NCIMB 13966)).